A 1412-amino-acid polypeptide reads, in one-letter code: DNA-directed RNA polymerase subunit beta' (1412 aa).

Zn(2+)-binding residues include cysteine 70, cysteine 72, cysteine 85, and cysteine 88. The Mg(2+) site is built by aspartate 460, aspartate 462, and aspartate 464. Positions 819, 893, 900, and 903 each coordinate Zn(2+). The disordered stretch occupies residues 1392–1412 (EEAFEFGTPSAPAEEPQHPAE).

It belongs to the RNA polymerase beta' chain family. In terms of assembly, the RNAP catalytic core consists of 2 alpha, 1 beta, 1 beta' and 1 omega subunit. When a sigma factor is associated with the core the holoenzyme is formed, which can initiate transcription. It depends on Mg(2+) as a cofactor. Zn(2+) is required as a cofactor.

It carries out the reaction RNA(n) + a ribonucleoside 5'-triphosphate = RNA(n+1) + diphosphate. In terms of biological role, DNA-dependent RNA polymerase catalyzes the transcription of DNA into RNA using the four ribonucleoside triphosphates as substrates. In Burkholderia mallei (strain NCTC 10247), this protein is DNA-directed RNA polymerase subunit beta'.